The chain runs to 395 residues: Elongation factor Tu (395 aa).

The 196-residue stretch at 10–205 folds into the tr-type G domain; the sequence is KPHVNVGTIG…VDNDIPIPPR (196 aa). Residues 19–26 are G1; the sequence is GHVDHGKT. A GTP-binding site is contributed by 19–26; it reads GHVDHGKT. T26 is a Mg(2+) binding site. The G2 stretch occupies residues 60–64; the sequence is GITIN. Positions 81-84 are G3; that stretch reads DCPG. Residues 81-85 and 136-139 each bind GTP; these read DCPGH and NKVD. The G4 stretch occupies residues 136–139; that stretch reads NKVD. Residues 174–176 are G5; the sequence is SAL.

This sequence belongs to the TRAFAC class translation factor GTPase superfamily. Classic translation factor GTPase family. EF-Tu/EF-1A subfamily. Monomer.

Its subcellular location is the cytoplasm. The enzyme catalyses GTP + H2O = GDP + phosphate + H(+). Its function is as follows. GTP hydrolase that promotes the GTP-dependent binding of aminoacyl-tRNA to the A-site of ribosomes during protein biosynthesis. The protein is Elongation factor Tu of Cytophaga hutchinsonii (strain ATCC 33406 / DSM 1761 / CIP 103989 / NBRC 15051 / NCIMB 9469 / D465).